Reading from the N-terminus, the 845-residue chain is MPMASGDESMSARSENPVQSARFDEATVLHELEHYLPKQAPLKDFVHHNTLHAFQDSKFHDAARNASGIFGYNLSLKLDKYRDLYHRGEITPAVLDWVVRRHKGDQSDLWKTKVVAGSFAPPPLPRIGAVRANWKKNLRIDLDSLVHPLLFRILCSYLDQGISMWTFPSGGEGFLCAIRELERHSFTSFFRRERARRLLLEQDCSIAGLLKLLVRDEALFERYLFDQQFAHPGWSGMVTVIEAQPDTLIDSRRIGLRELIVFELLLEIDALDEHFDEQWSPLEAELGGEPLDILAEVPRTELHDALAIWQEALEWSFYDPVLSAIQRQPAESPALPVKSFQGLFCIDDRICSFRRHIESLDPHCETYGTPGFFGVEFYFKPENAKSHTKVCPGSIEPRYLIKETGSRDRLEAEPHFSKHSHDLLGGWVISQTLGFWSAVKLFDSILKPSASPLGASSFRHMDRASSLTILNRSPDDREDGLQIGFSVAEMAERAENLLGSIGLTQDFAPIVYVVGHGASNTNNPHYAAYDCGACSGRPGSVNARVICFMLNHPEVRAILAGKGIEIPAATQFVGALHDTTRDEIAFYDEDSLSPDSRARHRANAAVFDKALALNAKERSRRFELTDSQQSPERVHEAVKARAVSLFEPRPELNHATNALCIVGRRFLSRKLFLDRRSFLNSYDYRVDPDGRFLLGILRAAAPVCGGINLEYFFSHVDNQKLGAGSKLPHNVMGLIGVANGNDGDLRPGLPSQMIEVHHPVRMMIVVEHFPAVVLNTIRQQPATWEWFANEWLNLTVVDPETHELFRFRDGIFEPYRALTERLEVAADLEKLFETQADNLPVLALS.

A disordered region spans residues 1–20; it reads MPMASGDESMSARSENPVQS. Residues Cys345, Asp347, His516, and Cys531 each coordinate Zn(2+).

The protein belongs to the inorganic carbon transporter (TC 9.A.2) DabA family. In terms of assembly, forms a complex with DabB. Zn(2+) is required as a cofactor.

Its subcellular location is the cell inner membrane. Its function is as follows. Part of an energy-coupled inorganic carbon pump. In Azotobacter vinelandii (strain DJ / ATCC BAA-1303), this protein is Probable inorganic carbon transporter subunit DabA.